The chain runs to 60 residues: Large ribosomal subunit protein uL30 (60 aa).

Belongs to the universal ribosomal protein uL30 family. Part of the 50S ribosomal subunit.

This Nocardioides sp. (strain ATCC BAA-499 / JS614) protein is Large ribosomal subunit protein uL30.